The following is a 426-amino-acid chain: Histidine--tRNA ligase (426 aa).

Belongs to the class-II aminoacyl-tRNA synthetase family. Homodimer.

Its subcellular location is the cytoplasm. It catalyses the reaction tRNA(His) + L-histidine + ATP = L-histidyl-tRNA(His) + AMP + diphosphate + H(+). The protein is Histidine--tRNA ligase of Streptococcus pyogenes serotype M18 (strain MGAS8232).